The sequence spans 164 residues: Glycine cleavage system H protein, mitochondrial (164 aa).

Residues 1–34 constitute a mitochondrion transit peptide; the sequence is MALRLWASSAANALKISCSGATRAAPAYSISRYF. The region spanning 56 to 138 is the Lipoyl-binding domain; the sequence is VATIGITDHA…YEDGWMIKVK (83 aa). Residue Lys97 is modified to N6-lipoyllysine.

The protein belongs to the GcvH family. As to quaternary structure, the glycine cleavage system is composed of four proteins: P, T, L and H. (R)-lipoate is required as a cofactor.

It is found in the mitochondrion. The glycine cleavage system catalyzes the degradation of glycine. The H protein shuttles the methylamine group of glycine from the P protein to the T protein. This chain is Glycine cleavage system H protein, mitochondrial (GDCSH), found in Oryza sativa subsp. indica (Rice).